The chain runs to 284 residues: D-tagatose-1,6-bisphosphate aldolase subunit GatY (284 aa).

Residue Asp82 is the Proton donor of the active site. Residues His83 and His180 each coordinate Zn(2+). Gly181 is a binding site for dihydroxyacetone phosphate. His208 serves as a coordination point for Zn(2+). Residues 209-211 (GAS) and 230-233 (NVAT) each bind dihydroxyacetone phosphate.

It belongs to the class II fructose-bisphosphate aldolase family. TagBP aldolase GatY subfamily. Forms a complex with GatZ. It depends on Zn(2+) as a cofactor.

It carries out the reaction D-tagatofuranose 1,6-bisphosphate = D-glyceraldehyde 3-phosphate + dihydroxyacetone phosphate. Its pathway is carbohydrate metabolism; D-tagatose 6-phosphate degradation; D-glyceraldehyde 3-phosphate and glycerone phosphate from D-tagatose 6-phosphate: step 2/2. Functionally, catalytic subunit of the tagatose-1,6-bisphosphate aldolase GatYZ, which catalyzes the reversible aldol condensation of dihydroxyacetone phosphate (DHAP or glycerone-phosphate) with glyceraldehyde 3-phosphate (G3P) to produce tagatose 1,6-bisphosphate (TBP). Requires GatZ subunit for full activity and stability. Is involved in the catabolism of galactitol. The chain is D-tagatose-1,6-bisphosphate aldolase subunit GatY from Escherichia coli (strain K12 / MC4100 / BW2952).